The primary structure comprises 185 residues: Ribosome-recycling factor (185 aa).

Belongs to the RRF family.

It is found in the cytoplasm. Functionally, responsible for the release of ribosomes from messenger RNA at the termination of protein biosynthesis. May increase the efficiency of translation by recycling ribosomes from one round of translation to another. The polypeptide is Ribosome-recycling factor (Shouchella clausii (strain KSM-K16) (Alkalihalobacillus clausii)).